We begin with the raw amino-acid sequence, 232 residues long: Putative N-acetylmannosamine-6-phosphate 2-epimerase (232 aa).

Belongs to the NanE family.

The enzyme catalyses an N-acyl-D-glucosamine 6-phosphate = an N-acyl-D-mannosamine 6-phosphate. The protein operates within amino-sugar metabolism; N-acetylneuraminate degradation; D-fructose 6-phosphate from N-acetylneuraminate: step 3/5. Functionally, converts N-acetylmannosamine-6-phosphate (ManNAc-6-P) to N-acetylglucosamine-6-phosphate (GlcNAc-6-P). The polypeptide is Putative N-acetylmannosamine-6-phosphate 2-epimerase (Borreliella burgdorferi (strain ZS7) (Borrelia burgdorferi)).